Here is a 232-residue protein sequence, read N- to C-terminus: Ubiquitin-conjugating enzyme E2-24 kDa (232 aa).

The segment covering 1 to 37 (MSSTPAAGSAAEVATSSATSNAPSAPSTTASNVSNTS) has biased composition (low complexity). Residues 1 to 87 (MSSTPAAGSA…PRISRALGTS (87 aa)) form a disordered region. Residues 58–67 (GASGSNAGGG) are compositionally biased toward gly residues. In terms of domain architecture, UBC core spans 86–232 (TSAKRIQKEL…ARLWTKRYAT (147 aa)). The active-site Glycyl thioester intermediate is Cys170.

This sequence belongs to the ubiquitin-conjugating enzyme family.

The enzyme catalyses S-ubiquitinyl-[E1 ubiquitin-activating enzyme]-L-cysteine + [E2 ubiquitin-conjugating enzyme]-L-cysteine = [E1 ubiquitin-activating enzyme]-L-cysteine + S-ubiquitinyl-[E2 ubiquitin-conjugating enzyme]-L-cysteine.. It functions in the pathway protein modification; protein ubiquitination. Its function is as follows. Catalyzes the covalent attachment of ubiquitin to other proteins. The polypeptide is Ubiquitin-conjugating enzyme E2-24 kDa (Drosophila melanogaster (Fruit fly)).